The primary structure comprises 768 residues: Solute carrier family 45 member 4 (768 aa).

Residues 1–32 (MKMAPQNADPESMQVQELSVPLPDPQKAGGAE) form a disordered region. Helical transmembrane passes span 63 to 83 (EFCYAMETALVTPILLQIGLP), 86 to 106 (YYSLTWFLSPILGLIFTPLIG), 123 to 143 (ILALCVGVLFGVALFLNGSAI), 155 to 175 (PIGIVLTVLGVVVLDFSADAT), 196 to 216 (LNIHAFSAGLGGAIGYVLGGL), and 233 to 253 (VLFFFAAIIFTVSVALHLFSI). Disordered regions lie at residues 259–284 (SPQQERSAEEPGALDGGEPHGVPAFP) and 379–419 (NEAK…RHAF). Ser-424 and Ser-454 each carry phosphoserine. A disordered region spans residues 460–489 (DMQKRQRQHRHRNQSGATTSSGDTESEEGE). The segment covering 473–482 (QSGATTSSGD) has biased composition (low complexity). At Ser-485 the chain carries Phosphoserine. The next 6 membrane-spanning stretches (helical) occupy residues 518–538 (TWFSVIAEAVFYTDFMGQVIF), 560–580 (MGCWGLVIYAATGAICSALLQ), 592–612 (VIYVLGTLGFSVGTAVMAMFP), 614–634 (VYVAMVTISTMGIVSMSISYC), 666–686 (ILSCQVYISQILVASALGGVV), and 695–715 (IPMVASVGSFLGFLTATFLVI). The tract at residues 726–768 (EQKGLSSPLAGEGRAGGNSEKPTVLKLTRKEGLQGPVETESVV) is disordered. Ser-732 bears the Phosphoserine mark.

The protein belongs to the glycoside-pentoside-hexuronide (GPH) cation symporter transporter (TC 2.A.2) family.

It is found in the membrane. It catalyses the reaction sucrose(out) + H(+)(out) = sucrose(in) + H(+)(in). Functionally, proton-associated sucrose transporter. May be able to transport also glucose and fructose. This is Solute carrier family 45 member 4 from Homo sapiens (Human).